The sequence spans 360 residues: Phospho-N-acetylmuramoyl-pentapeptide-transferase (360 aa).

Transmembrane regions (helical) follow at residues 26–46 (GVLA…FFIA), 70–90 (GTPT…TLLW), 94–114 (GNPL…IGFV), 136–156 (LQSL…SNPV), 164–184 (FIPH…YFVI), 199–219 (GLAI…AYVS), 236–256 (SGQM…FLWF), 263–283 (VFMG…VAIV), 289–309 (VLFI…IQVV), and 339–359 (AVRF…SLKI).

Belongs to the glycosyltransferase 4 family. MraY subfamily. The cofactor is Mg(2+).

Its subcellular location is the cell inner membrane. It catalyses the reaction UDP-N-acetyl-alpha-D-muramoyl-L-alanyl-gamma-D-glutamyl-meso-2,6-diaminopimeloyl-D-alanyl-D-alanine + di-trans,octa-cis-undecaprenyl phosphate = di-trans,octa-cis-undecaprenyl diphospho-N-acetyl-alpha-D-muramoyl-L-alanyl-D-glutamyl-meso-2,6-diaminopimeloyl-D-alanyl-D-alanine + UMP. It functions in the pathway cell wall biogenesis; peptidoglycan biosynthesis. Functionally, catalyzes the initial step of the lipid cycle reactions in the biosynthesis of the cell wall peptidoglycan: transfers peptidoglycan precursor phospho-MurNAc-pentapeptide from UDP-MurNAc-pentapeptide onto the lipid carrier undecaprenyl phosphate, yielding undecaprenyl-pyrophosphoryl-MurNAc-pentapeptide, known as lipid I. This Acidithiobacillus ferrooxidans (strain ATCC 23270 / DSM 14882 / CIP 104768 / NCIMB 8455) (Ferrobacillus ferrooxidans (strain ATCC 23270)) protein is Phospho-N-acetylmuramoyl-pentapeptide-transferase.